Here is a 23-residue protein sequence, read N- to C-terminus: 48 kDa cell wall protein (23 aa).

It is found in the secreted. It localises to the cell wall. This Nicotiana tabacum (Common tobacco) protein is 48 kDa cell wall protein.